Reading from the N-terminus, the 591-residue chain is Metalloendopeptidase OPG085 (591 aa).

His41 contributes to the Zn(2+) binding site. Glu44 is an active-site residue. His45 is a Zn(2+) binding site.

The protein belongs to the peptidase M44 family. Zn(2+) is required as a cofactor. Post-translationally, undergoes proteolytic processing during the course of infection. May be cleaved into 46 kDa and 22 kDa products (Potential).

It localises to the virion. Functionally, probably involved in maturation of some viral proteins by processing them preferentially at Ala-Gly-|-Ser/Thr/Lys motifs. Does not seem to be responsible for the cleavage of major core proteins. This is Metalloendopeptidase OPG085 (OPG085) from Homo sapiens (Human).